The chain runs to 147 residues: Hemoglobin subunit beta-A/B (147 aa).

The Globin domain maps to 2 to 147; it reads EWTDAERSAI…VVNALKRQYH (146 aa). Positions 63 and 92 each coordinate heme b.

The protein belongs to the globin family. Heterotetramer of two alpha chains and two beta chains. As to expression, red blood cells.

Functionally, involved in oxygen transport from gills to the various peripheral tissues. The protein is Hemoglobin subunit beta-A/B of Cyprinus carpio (Common carp).